A 554-amino-acid polypeptide reads, in one-letter code: Arginine--tRNA ligase (554 aa).

The short motif at 129–139 is the 'HIGH' region element; that stretch reads ANPTGPLHIGH.

The protein belongs to the class-I aminoacyl-tRNA synthetase family. As to quaternary structure, monomer.

The protein resides in the cytoplasm. The enzyme catalyses tRNA(Arg) + L-arginine + ATP = L-arginyl-tRNA(Arg) + AMP + diphosphate. This Syntrophotalea carbinolica (strain DSM 2380 / NBRC 103641 / GraBd1) (Pelobacter carbinolicus) protein is Arginine--tRNA ligase.